We begin with the raw amino-acid sequence, 683 residues long: Actin-binding LIM protein 3 (683 aa).

Residue Met1 is modified to N-acetylmethionine. LIM zinc-binding domains lie at 21–80 (IQCY…LYGT), 80–140 (TRCD…MASS), 149–208 (SHCA…QFGI), and 208–268 (IKCE…ARAE). Residues Ser277, Ser280, Ser282, Ser286, Ser290, Ser337, Ser372, and Ser373 each carry the phosphoserine modification. Positions 372-472 (SSPGYIDSPT…EDISQTSKYS (101 aa)) are disordered. Tyr376 is modified (phosphotyrosine). Phosphoserine is present on residues Ser379 and Ser388. 3 stretches are compositionally biased toward polar residues: residues 380 to 393 (PTYSRQGMSPTFSR), 406 to 426 (GRSSPYHSQLDVRSSTPTSYQ), and 454 to 471 (STATKSKTSEDISQTSKY). Phosphoserine is present on residues Ser493, Ser503, and Ser504. Phosphothreonine is present on Thr543. 3 positions are modified to phosphoserine: Ser567, Ser576, and Ser607. An HP domain is found at 615-683 (MREYKIYPYE…NELKKQARLF (69 aa)). Arg631 carries the omega-N-methylarginine modification.

As to quaternary structure, directly interacts with F-actin and ABRA. As to expression, expressed predominantly in heart and brain.

The protein resides in the cytoplasm. Its function is as follows. May act as scaffold protein. May stimulate ABRA activity and ABRA-dependent SRF transcriptional activity. The chain is Actin-binding LIM protein 3 (ABLIM3) from Homo sapiens (Human).